Here is an 89-residue protein sequence, read N- to C-terminus: Elongation factor 1-beta (89 aa).

The protein belongs to the EF-1-beta/EF-1-delta family.

Promotes the exchange of GDP for GTP in EF-1-alpha/GDP, thus allowing the regeneration of EF-1-alpha/GTP that could then be used to form the ternary complex EF-1-alpha/GTP/AAtRNA. This is Elongation factor 1-beta from Methanobrevibacter smithii (strain ATCC 35061 / DSM 861 / OCM 144 / PS).